We begin with the raw amino-acid sequence, 671 residues long: Carbohydrate acetyl esterase/feruloyl esterase (671 aa).

The first 24 residues, 1 to 24 (MYQSTLKTILLASALLILPASMSA), serve as a signal peptide directing secretion. The segment at 1–296 (MYQSTLKTIL…YGEAVARHLG (296 aa)) is carbohydrate acetyl esterase. Active-site for acetyl esterase activity residues include serine 55, aspartate 271, and histidine 274. Residues 297-671 (YEPKRPYIEM…NEFIPHLFKK (375 aa)) form a feruloyl esterase region.

The protein in the N-terminal section; belongs to the carbohydrate esterase 6 family.

It catalyses the reaction feruloyl-polysaccharide + H2O = ferulate + polysaccharide.. The protein operates within glycan degradation; xylan degradation. Involved in degradation of plant cell wall polysaccharides. Bifunctional esterase that possesses both acetyl esterase and ferulic acid esterase activities. Has deacetylase activity towards acetylated xylo-oligosaccharides smaller than xylo-heptaose, as well as from glucose-pentaacetate. Is also able to release ferulic acid from methylferulate, and from the more natural substrates wheat bran, corn fiber, and XOS(FA,Ac), a corn fiber-derived substrate enriched in O-acetyl and ferulic acid esters. The chain is Carbohydrate acetyl esterase/feruloyl esterase from Xylanibacter ruminicola (strain ATCC 19189 / DSM 19721 / CIP 105475 / JCM 8958 / 23) (Prevotella ruminicola).